Consider the following 124-residue polypeptide: Phosphoribosyl-AMP cyclohydrolase (124 aa).

Aspartate 82 contributes to the Mg(2+) binding site. Cysteine 83 lines the Zn(2+) pocket. The Mg(2+) site is built by aspartate 84 and aspartate 86. Positions 99 and 106 each coordinate Zn(2+).

Belongs to the PRA-CH family. Homodimer. The cofactor is Mg(2+). Zn(2+) serves as cofactor.

It localises to the cytoplasm. It catalyses the reaction 1-(5-phospho-beta-D-ribosyl)-5'-AMP + H2O = 1-(5-phospho-beta-D-ribosyl)-5-[(5-phospho-beta-D-ribosylamino)methylideneamino]imidazole-4-carboxamide. It functions in the pathway amino-acid biosynthesis; L-histidine biosynthesis; L-histidine from 5-phospho-alpha-D-ribose 1-diphosphate: step 3/9. In terms of biological role, catalyzes the hydrolysis of the adenine ring of phosphoribosyl-AMP. This is Phosphoribosyl-AMP cyclohydrolase from Zymomonas mobilis subsp. mobilis (strain ATCC 31821 / ZM4 / CP4).